Reading from the N-terminus, the 299-residue chain is GTP cyclohydrolase FolE2 (299 aa).

Positions 1–25 (MKTKQWPSKTERHKRFGSVPPVAGK) are disordered.

Belongs to the GTP cyclohydrolase IV family.

The enzyme catalyses GTP + H2O = 7,8-dihydroneopterin 3'-triphosphate + formate + H(+). Its pathway is cofactor biosynthesis; 7,8-dihydroneopterin triphosphate biosynthesis; 7,8-dihydroneopterin triphosphate from GTP: step 1/1. Functionally, converts GTP to 7,8-dihydroneopterin triphosphate. In Halalkalibacterium halodurans (strain ATCC BAA-125 / DSM 18197 / FERM 7344 / JCM 9153 / C-125) (Bacillus halodurans), this protein is GTP cyclohydrolase FolE2.